Here is a 264-residue protein sequence, read N- to C-terminus: [LysW]-aminoadipate/[LysW]-glutamate kinase (264 aa).

Substrate contacts are provided by residues 35–36 (GG), Arg-62, and Asn-167.

It belongs to the acetylglutamate kinase family. LysZ subfamily.

The protein resides in the cytoplasm. It catalyses the reaction [amino-group carrier protein]-C-terminal-N-(1,4-dicarboxybutan-1-yl)-L-glutamine + ATP = [amino-group carrier protein]-C-terminal-N-(1-carboxy-5-phosphooxy-5-oxopentan-1-yl)-L-glutamine + ADP. The enzyme catalyses [amino-group carrier protein]-C-terminal-gamma-(L-glutamyl)-L-glutamate + ATP = [amino-group carrier protein]-C-terminal-gamma-(5-phospho-L-glutamyl)-L-glutamate + ADP. It functions in the pathway amino-acid biosynthesis; L-lysine biosynthesis via AAA pathway; L-lysine from L-alpha-aminoadipate (Thermus route): step 2/5. It participates in amino-acid biosynthesis; L-arginine biosynthesis. Involved in both the arginine and lysine biosynthetic pathways. Phosphorylates the LysW-bound precursors glutamate (for arginine biosynthesis), respectively alpha-aminoadipate (for lysine biosynthesis). This is [LysW]-aminoadipate/[LysW]-glutamate kinase from Saccharolobus solfataricus (strain ATCC 35092 / DSM 1617 / JCM 11322 / P2) (Sulfolobus solfataricus).